The primary structure comprises 172 residues: Myosin regulatory light chain 2, smooth muscle minor isoform (172 aa).

At Ser2 the chain carries N-acetylserine. Phosphothreonine; by MLCK is present on Thr19. Ser20 is modified (phosphoserine; by MLCK). 3 EF-hand domains span residues 29 to 64 (SQIQ…LGKN), 98 to 133 (DPED…MGDR), and 134 to 169 (FTDE…GAKD). 4 residues coordinate Ca(2+): Asp42, Asn44, Asp46, and Asp53.

Myosin is a hexamer of 2 heavy chains and 4 light chains. Post-translationally, phosphorylation increases the actin-activated myosin ATPase activity and thereby regulates the contractile activity.

In terms of biological role, myosin regulatory subunit that plays an important role in regulation of both smooth muscle and nonmuscle cell contractile activity. Implicated in cytokinesis, receptor capping, and cell locomotion. The protein is Myosin regulatory light chain 2, smooth muscle minor isoform of Gallus gallus (Chicken).